Reading from the N-terminus, the 323-residue chain is Leucine-rich repeat-containing protein 46 (323 aa).

LRR repeat units lie at residues 49 to 70 (DLETVRLDGEGITCIGNLERLR), 71 to 92 (NIHSLYLQSNKIQRIENLACIT), 93 to 114 (SLRFLSLAGNQIRHVENLLDLQ), and 115 to 135 (YLQFLDLSENLIETLKLDELP). The LRRCT domain maps to 146 to 188 (NPCTNQDGYRKMVIGALPLLLDLDKQPILERWTSDEEDKSSDE). At T178 the chain carries Phosphothreonine. Residues S179, S185, and S186 each carry the phosphoserine modification. The stretch at 203-228 (RGFFKDLEQELHQHQERRQQAALTEH) forms a coiled coil. The segment at 252-323 (DCSPAVTEEP…TKSTNKRGTK (72 aa)) is disordered. Polar residues predominate over residues 269 to 290 (ATSSTQMASSSKKQVPRNQKGS). Over residues 297 to 310 (ALAATASKTSLAAA) the composition is skewed to low complexity. Position 303 is a phosphoserine (S303).

It is found in the cell projection. It localises to the cilium. The protein resides in the flagellum. Its function is as follows. Required for normal spermatogenesis and male fertility. Plays an important role in sperm flagellum biogenesis. The chain is Leucine-rich repeat-containing protein 46 (Lrrc46) from Rattus norvegicus (Rat).